Here is a 50-residue protein sequence, read N- to C-terminus: Thymosin beta-4 (50 aa).

Residues 1-50 (MLLPATMSDKPDMAEIEKFDKSKLKKTETQEKNPLPSKETIEQEKQAGES) form a disordered region. Ser-8 is subject to Phosphoserine. The segment covering 9 to 31 (DKPDMAEIEKFDKSKLKKTETQE) has biased composition (basic and acidic residues). The residue at position 10 (Lys-10) is an N6-acetyllysine. Lys-18 carries the post-translational modification N6-acetyllysine; alternate. Lys-18 is covalently cross-linked (Glycyl lysine isopeptide (Lys-Gly) (interchain with G-Cter in SUMO2); alternate). Thr-29 is subject to Phosphothreonine. Lys-32 carries the post-translational modification N6-acetyllysine. Residue Ser-37 is modified to Phosphoserine. At Lys-38 the chain carries N6-acetyllysine. The segment covering 39–50 (ETIEQEKQAGES) has biased composition (basic and acidic residues). A Phosphothreonine modification is found at Thr-40. N6-acetyllysine is present on Lys-45.

The protein belongs to the thymosin beta family. In terms of assembly, identified in a complex composed of ACTA1, COBL, GSN AND TMSB4X. Interacts with SERPINB1. In terms of processing, acSDKP is inactivated by ACE, which removes the dipeptide Lys-Pro from its C-terminus. In terms of tissue distribution, originally found in thymus but it is widely distributed in many tissues.

The protein resides in the cytoplasm. The protein localises to the cytoskeleton. In terms of biological role, plays an important role in the organization of the cytoskeleton. Binds to and sequesters actin monomers (G actin) and therefore inhibits actin polymerization. Its function is as follows. Potent inhibitor of bone marrow derived stem cell differentiation. Acts by inhibits the entry of hematopoietic pluripotent stem cells into the S-phase. The chain is Thymosin beta-4 (Tmsb4x) from Mus musculus (Mouse).